The chain runs to 536 residues: Chlorophyllide a oxygenase, chloroplastic (536 aa).

A chloroplast-targeting transit peptide spans 1–36 (MNAAVFSPSALSLPISFSKTRSSFLSRKKGVKGEFR). Residues 123–150 (IGTVKKELAGLQEELSKAHQQVHISEAR) are a coiled coil. Residues 221–321 (WYPVAFTADL…CLEQEGMIWI (101 aa)) enclose the Rieske domain. [2Fe-2S] cluster is bound by residues Cys262, His264, Cys281, and His284. Asp360, Asp364, His367, and His372 together coordinate Fe cation.

It is found in the plastid. The protein resides in the chloroplast membrane. It localises to the chloroplast thylakoid membrane. It carries out the reaction chlorophyllide a + 2 NADPH + 2 O2 + 2 H(+) = chlorophyllide b + 2 NADP(+) + 3 H2O. It participates in porphyrin-containing compound metabolism; chlorophyll biosynthesis. Its function is as follows. Catalyzes a two-step oxygenase reaction involved in the synthesis of chlorophyll b. Acts specifically on the non-esterified chlorophyllide a and not on chlorophyll a. This chain is Chlorophyllide a oxygenase, chloroplastic (CAO), found in Arabidopsis thaliana (Mouse-ear cress).